A 324-amino-acid polypeptide reads, in one-letter code: tRNA N6-adenosine threonylcarbamoyltransferase (324 aa).

Residues histidine 107, histidine 111, and tyrosine 128 each contribute to the Fe cation site. Substrate-binding positions include 128-132 (YVSGG), aspartate 160, glycine 173, glutamate 177, and asparagine 256. Aspartate 284 provides a ligand contact to Fe cation.

The protein belongs to the KAE1 / TsaD family. In terms of assembly, monomer. Component of the KEOPS complex that consists of Kae1, Bud32, Cgi121 and Pcc1; the whole complex dimerizes. It depends on Fe(2+) as a cofactor.

Its subcellular location is the cytoplasm. It catalyses the reaction L-threonylcarbamoyladenylate + adenosine(37) in tRNA = N(6)-L-threonylcarbamoyladenosine(37) in tRNA + AMP + H(+). Its function is as follows. Required for the formation of a threonylcarbamoyl group on adenosine at position 37 (t(6)A37) in tRNAs that read codons beginning with adenine. Is a component of the KEOPS complex that is probably involved in the transfer of the threonylcarbamoyl moiety of threonylcarbamoyl-AMP (TC-AMP) to the N6 group of A37. Kae1 likely plays a direct catalytic role in this reaction, but requires other protein(s) of the complex to fulfill this activity. The protein is tRNA N6-adenosine threonylcarbamoyltransferase of Methanothrix thermoacetophila (strain DSM 6194 / JCM 14653 / NBRC 101360 / PT) (Methanosaeta thermophila).